A 267-amino-acid chain; its full sequence is uncharacterized protein (267 aa).

Residues 58 to 90 are disordered; it reads RHTDDKQEKNQNEGEDNQKGENKTTDQQDGPKK. 2 helical membrane-spanning segments follow: residues 101-121 and 226-246; these read IYVLAVAGLSFVTSFIMLSQM and GMTTVKMIQLIIGVVILAWLG.

It is found in the membrane. This is an uncharacterized protein from Caenorhabditis elegans.